Here is a 414-residue protein sequence, read N- to C-terminus: Serine hydroxymethyltransferase (414 aa).

Residues L117 and 121–123 (GHL) each bind (6S)-5,6,7,8-tetrahydrofolate. K226 is modified (N6-(pyridoxal phosphate)lysine). (6S)-5,6,7,8-tetrahydrofolate is bound by residues E241 and 349-351 (TPF).

Belongs to the SHMT family. In terms of assembly, homodimer. Pyridoxal 5'-phosphate is required as a cofactor.

It localises to the cytoplasm. The enzyme catalyses (6R)-5,10-methylene-5,6,7,8-tetrahydrofolate + glycine + H2O = (6S)-5,6,7,8-tetrahydrofolate + L-serine. It functions in the pathway one-carbon metabolism; tetrahydrofolate interconversion. The protein operates within amino-acid biosynthesis; glycine biosynthesis; glycine from L-serine: step 1/1. Its function is as follows. Catalyzes the reversible interconversion of serine and glycine with tetrahydrofolate (THF) serving as the one-carbon carrier. Also exhibits THF-independent aldolase activity toward beta-hydroxyamino acids, producing glycine and aldehydes, via a retro-aldol mechanism. This is Serine hydroxymethyltransferase from Methanothrix thermoacetophila (strain DSM 6194 / JCM 14653 / NBRC 101360 / PT) (Methanosaeta thermophila).